The chain runs to 231 residues: MTEALDTRFTQFLLESQALKFGSFTLKSGRQSPYFINAGAFDDGAKIATLGEFYAEKIQQEIAASNLAARIDTVFGPAYKGIPLAVATTIAMQHRFNASIGYTFDRKEKKDHGDGGTMVGKPLEDGMNVLLVDDVMTAGTAVREVVPKLKAQADVNIVGLVLSVDRMEKTKDSDLSAVQDVQREFGFPVFAIANVKEIFAAGRQLIGEHGQPYVTDEIAKAAEEYLTQYGA.

Residues lysine 27, 79 to 80, arginine 106, lysine 107, lysine 110, histidine 112, and 133 to 141 contribute to the 5-phospho-alpha-D-ribose 1-diphosphate site; these read YK and DDVMTAGTA. Threonine 137 and arginine 166 together coordinate orotate.

The protein belongs to the purine/pyrimidine phosphoribosyltransferase family. PyrE subfamily. As to quaternary structure, homodimer. Mg(2+) serves as cofactor.

It carries out the reaction orotidine 5'-phosphate + diphosphate = orotate + 5-phospho-alpha-D-ribose 1-diphosphate. The protein operates within pyrimidine metabolism; UMP biosynthesis via de novo pathway; UMP from orotate: step 1/2. Catalyzes the transfer of a ribosyl phosphate group from 5-phosphoribose 1-diphosphate to orotate, leading to the formation of orotidine monophosphate (OMP). This chain is Orotate phosphoribosyltransferase, found in Bifidobacterium animalis subsp. lactis (strain AD011).